Here is a 1141-residue protein sequence, read N- to C-terminus: Envelopment polyprotein (1141 aa).

Positions 1–18 (MGRLYLIVLGVLITATAG) are cleaved as a signal peptide. Residues 19–483 (FPRSVHELKI…HSLAVELCVP (465 aa)) lie on the Lumenal side of the membrane. Intrachain disulfides connect Cys30-Cys158, Cys64-Cys164, Cys113-Cys135, Cys140-Cys145, Cys182-Cys192, Cys217-Cys253, Cys242-Cys357, Cys382-Cys441, Cys386-Cys395, and Cys458-Cys481. An N-linked (GlcNAc...) asparagine; by host glycan is attached at Asn141. Asn353 carries N-linked (GlcNAc...) asparagine; by host glycosylation. A glycan (N-linked (GlcNAc...) asparagine; by host) is linked at Asn405. A helical transmembrane segment spans residues 484 to 506 (GIHGWATIALVITFCFGWLLIPT). The Cytoplasmic segment spans residues 507–633 (TTMVVLKCLR…LGVFRYKSRC (127 aa)). A binding to the ribonucleoprotein region spans residues 522–539 (CSHYSTESKFKVILEKVK). CCHC-type zinc fingers lie at residues 551 to 571 (CDICHHECETAKELESHKKSC) and 576 to 597 (CPYCMTITEATESALQAHYAVC). 3 binding to the ribonucleoprotein regions span residues 594 to 611 (YAVCKLTGRFHEALKKSL), 598 to 609 (KLTGRFHEALKK), and 617 to 631 (QRGCYRTLGVFRYKS). An ITAM domain is found at 617–640 (QRGCYRTLGVFRYKSRCYVGLVWM). Phosphotyrosine occurs at positions 621 and 634. Positions 621-624 (YRTL) match the YxxL motif. Residues 634–654 (YVGLVWMCLLTLELIVWAASA) traverse the membrane as a helical segment. At 655-1110 (DTPLLEPGWS…EWLLGILNGN (456 aa)) the chain is on the lumenal side. 8 disulfides stabilise this stretch: Cys741/Cys776, Cys745/Cys783, Cys757/Cys890, Cys771/Cys901, Cys786/Cys909, Cys812/Cys821, Cys829/Cys838, and Cys869/Cys873. The interval 763–783 (YQYETSWSCNPPDCPGVGTGC) is fusion loop. An N-linked (GlcNAc...) asparagine; by host glycan is attached at Asn933. 5 cysteine pairs are disulfide-bonded: Cys975/Cys1005, Cys998/Cys1050, Cys1015/Cys1020, Cys1051/Cys1056, and Cys1090/Cys1094. Residues 1111 to 1131 (WVVVAVLVIILLISIFLFSFF) traverse the membrane as a helical segment. Residues 1127–1141 (LFSFFCPIRSHKKQL) form a binding to the ribonucleoprotein region. Residues 1132–1141 (CPIRSHKKQL) are Cytoplasmic-facing.

Belongs to the hantavirus envelope glycoprotein family. As to quaternary structure, homodimer. Homotetramer; forms heterotetrameric Gn-Gc spikes in the pre-fusion conformation. Interacts (via C-terminus) with the nucleoprotein. Interacts with host TUFM; this interaction contributes to the virus-induced degradation of mitochondria by autophagy, which leads to degradation of host MAVS and inhibition of type I interferon (IFN) responses. Interacts with host MAP1LC3B; this interaction contributes to the virus-induced degradation of mitochondria by autophagy, which leads to degradation of host MAVS and inhibition of type I interferon (IFN) responses. In terms of assembly, homodimer. Homotetramer; forms heterotetrameric Gn-Gc spikes in the pre-fusion conformation. Homotrimer; forms homotrimer in the post-fusion conformation at acidic pH. Interacts (via C-terminus) with the nucleoprotein. Post-translationally, envelope polyprotein precursor is quickly cleaved in vivo just after synthesis, presumably by host signal peptidase.

Its subcellular location is the virion membrane. It localises to the host cell surface. The protein resides in the host Golgi apparatus membrane. It is found in the host endoplasmic reticulum membrane. The protein localises to the host mitochondrion. Forms homotetramers with glycoprotein C at the surface of the virion. Attaches the virion to host cell receptors including integrin ITGAV/ITGB3. This attachment induces virion internalization predominantly through clathrin-dependent endocytosis. Mediates the assembly and budding of infectious virus particles through its interaction with the nucleocapsid protein and the viral genome. May dysregulate normal immune and endothelial cell responses through an ITAM motif. Translocates to mitochondria, binds to host TUFM and recruits MAP1LC3B. These interactions induce mitochondrial autophagy and therefore destruction of host MAVS leading to inhibition of type I interferon (IFN) responses. Concomitant breakdown of glycoprotein N is apparently prevented by the nucleoprotein that may inhibit Gn-stimulated autophagosome-lysosome fusion. Interacts with the viral genomic RNA. Its function is as follows. Forms homotetramers with glycoprotein N at the surface of the virion. Attaches the virion to host cell receptors including integrin ITGAV/ITGB3. This attachment induces virion internalization predominantly through clathrin-dependent endocytosis. Class II fusion protein that promotes fusion of viral membrane with host endosomal membrane after endocytosis of the virion. The protein is Envelopment polyprotein (GP) of Homo sapiens (Human).